The chain runs to 392 residues: O-phospho-L-seryl-tRNA:Cys-tRNA synthase (392 aa).

Pyridoxal 5'-phosphate contacts are provided by residues 85 to 86 (AR), N190, and 213 to 215 (SGH). K216 carries the post-translational modification N6-(pyridoxal phosphate)lysine.

This sequence belongs to the SepCysS family. Homodimer. Interacts with SepRS. Requires pyridoxal 5'-phosphate as cofactor.

It carries out the reaction O-phospho-L-seryl-tRNA(Cys) + hydrogen sulfide + H(+) = L-cysteinyl-tRNA(Cys) + phosphate. Its function is as follows. Converts O-phospho-L-seryl-tRNA(Cys) (Sep-tRNA(Cys)) to L-cysteinyl-tRNA(Cys) (Cys-tRNA(Cys)). This Methanoculleus marisnigri (strain ATCC 35101 / DSM 1498 / JR1) protein is O-phospho-L-seryl-tRNA:Cys-tRNA synthase.